The sequence spans 358 residues: Alanine racemase (358 aa).

Lysine 34 (proton acceptor; specific for D-alanine) is an active-site residue. Lysine 34 is subject to N6-(pyridoxal phosphate)lysine. Arginine 130 is a substrate binding site. Residue tyrosine 254 is the Proton acceptor; specific for L-alanine of the active site. Methionine 302 serves as a coordination point for substrate.

This sequence belongs to the alanine racemase family. It depends on pyridoxal 5'-phosphate as a cofactor.

The catalysed reaction is L-alanine = D-alanine. Its pathway is amino-acid biosynthesis; D-alanine biosynthesis; D-alanine from L-alanine: step 1/1. Catalyzes the interconversion of L-alanine and D-alanine. May also act on other amino acids. This Stutzerimonas stutzeri (strain A1501) (Pseudomonas stutzeri) protein is Alanine racemase (alr).